The following is a 381-amino-acid chain: Cytochrome b (381 aa).

A run of 4 helical transmembrane segments spans residues Gly32–Met52, Met76–Leu98, Val113–Val133, and Phe179–Ala199. Heme b is bound by residues His82 and His96. Positions 183 and 197 each coordinate heme b. Position 202 (His202) interacts with a ubiquinone. The next 4 membrane-spanning stretches (helical) occupy residues Phe225–Phe245, Ala289–Gly309, Ile318–Gly338, and Thr345–Pro365.

The protein belongs to the cytochrome b family. In terms of assembly, the main subunits of complex b-c1 are: cytochrome b, cytochrome c1 and the Rieske protein. The cofactor is heme b.

It is found in the mitochondrion inner membrane. Functionally, component of the ubiquinol-cytochrome c reductase complex (complex III or cytochrome b-c1 complex) that is part of the mitochondrial respiratory chain. The b-c1 complex mediates electron transfer from ubiquinol to cytochrome c. Contributes to the generation of a proton gradient across the mitochondrial membrane that is then used for ATP synthesis. This is Cytochrome b (MT-CYB) from Chlamydomonas reinhardtii (Chlamydomonas smithii).